A 429-amino-acid polypeptide reads, in one-letter code: MKKQNNLRSLAAQAVELVVEQGQSLSNVLPPLQQKVADKDKALLQELCFGVLRTLSQLEWLINKLMSRPMTGKQRTVHYLIMVGFYQLLYTRVPPHAALAETVEGAVSIKRPQLKGLINGVLRQFQRQQETLLNEFATSDARFLHPGWLVKRLQNAYPTQWQRIIEANNQRPPMWLRVNRTHHTRDGWLGLLEDAGMKGYPHPDYPDAVRLETPAPVHALPGFAEGWVTVQDASAQGCAVFLAPQNGEHILDLCAAPGGKTTHILEVAPEADVLAVDIDEQRLSRVYDNLKRLGMKATVKQGDGRYPAQWCGEQQFDRILLDAPCSATGVIRRHPDIKWLRRDRDIAELAQLQAEILDAVWPRLKPGGTLVYATCSVLPEENRDQIKAFLQRTPDAALSETGTPDQPGQQNLPGGEEGDGFFYAKLIKK.

Residues 254-260 (CAAPGGK), Asp-277, Asp-303, and Asp-322 contribute to the S-adenosyl-L-methionine site. The active-site Nucleophile is the Cys-375. A disordered region spans residues 397 to 419 (ALSETGTPDQPGQQNLPGGEEGD). Residues 400 to 412 (ETGTPDQPGQQNL) are compositionally biased toward polar residues.

Belongs to the class I-like SAM-binding methyltransferase superfamily. RsmB/NOP family.

Its subcellular location is the cytoplasm. The enzyme catalyses cytidine(967) in 16S rRNA + S-adenosyl-L-methionine = 5-methylcytidine(967) in 16S rRNA + S-adenosyl-L-homocysteine + H(+). Its function is as follows. Specifically methylates the cytosine at position 967 (m5C967) of 16S rRNA. The protein is Ribosomal RNA small subunit methyltransferase B of Salmonella typhi.